Reading from the N-terminus, the 632-residue chain is MAU2 chromatid cohesion factor homolog (632 aa).

TPR repeat units lie at residues 453 to 486 and 493 to 526; these read GGFY…ANAE and SCSL…ASKI.

Belongs to the SCC4/mau-2 family. As to quaternary structure, interacts with Nipped-B to form the cohesin loading complex.

It is found in the nucleus. The protein localises to the nucleoplasm. Required for association of the cohesin complex with chromatin during interphase. Plays a role in sister chromatid cohesion and normal progression through prometaphase. The polypeptide is MAU2 chromatid cohesion factor homolog (Drosophila yakuba (Fruit fly)).